The primary structure comprises 1035 residues: Glycine dehydrogenase (decarboxylating), mitochondrial (1035 aa).

A mitochondrion-targeting transit peptide spans 1-64 (MERARKLANR…KSFNTQQARS (64 aa)). Residue Lys771 is modified to N6-(pyridoxal phosphate)lysine.

This sequence belongs to the GcvP family. As to quaternary structure, homodimer. The glycine cleavage system is composed of four proteins: P, T, L and H. Pyridoxal 5'-phosphate serves as cofactor.

The protein resides in the mitochondrion. It carries out the reaction N(6)-[(R)-lipoyl]-L-lysyl-[glycine-cleavage complex H protein] + glycine + H(+) = N(6)-[(R)-S(8)-aminomethyldihydrolipoyl]-L-lysyl-[glycine-cleavage complex H protein] + CO2. In terms of biological role, the glycine cleavage system catalyzes the degradation of glycine. The P protein binds the alpha-amino group of glycine through its pyridoxal phosphate cofactor; CO(2) is released and the remaining methylamine moiety is then transferred to the lipoamide cofactor of the H protein. The sequence is that of Glycine dehydrogenase (decarboxylating), mitochondrial (GDCSP) from Solanum tuberosum (Potato).